The primary structure comprises 109 residues: T cell receptor alpha variable 26-2 (109 aa).

Residues 1–19 (MKLVTSITVLLSLGIMGDA) form the signal peptide. Residues 20 to 109 (KTTQPNSMES…AAVYYCILRD (90 aa)) enclose the Ig-like domain. The cysteines at positions 39 and 105 are disulfide-linked. N40 carries an N-linked (GlcNAc...) asparagine glycan.

In terms of assembly, alpha-beta TR is a heterodimer composed of an alpha and beta chain; disulfide-linked. The alpha-beta TR is associated with the transmembrane signaling CD3 coreceptor proteins to form the TR-CD3 (TcR or TCR). The assembly of alpha-beta TR heterodimers with CD3 occurs in the endoplasmic reticulum where a single alpha-beta TR heterodimer associates with one CD3D-CD3E heterodimer, one CD3G-CD3E heterodimer and one CD247 homodimer forming a stable octameric structure. CD3D-CD3E and CD3G-CD3E heterodimers preferentially associate with TR alpha and TR beta chains, respectively. The association of the CD247 homodimer is the last step of TcR assembly in the endoplasmic reticulum and is required for transport to the cell surface.

The protein resides in the cell membrane. V region of the variable domain of T cell receptor (TR) alpha chain that participates in the antigen recognition. Alpha-beta T cell receptors are antigen specific receptors which are essential to the immune response and are present on the cell surface of T lymphocytes. Recognize peptide-major histocompatibility (MH) (pMH) complexes that are displayed by antigen presenting cells (APC), a prerequisite for efficient T cell adaptive immunity against pathogens. Binding of alpha-beta TR to pMH complex initiates TR-CD3 clustering on the cell surface and intracellular activation of LCK that phosphorylates the ITAM motifs of CD3G, CD3D, CD3E and CD247 enabling the recruitment of ZAP70. In turn ZAP70 phosphorylates LAT, which recruits numerous signaling molecules to form the LAT signalosome. The LAT signalosome propagates signal branching to three major signaling pathways, the calcium, the mitogen-activated protein kinase (MAPK) kinase and the nuclear factor NF-kappa-B (NF-kB) pathways, leading to the mobilization of transcription factors that are critical for gene expression and essential for T cell growth and differentiation. The T cell repertoire is generated in the thymus, by V-(D)-J rearrangement. This repertoire is then shaped by intrathymic selection events to generate a peripheral T cell pool of self-MH restricted, non-autoaggressive T cells. Post-thymic interaction of alpha-beta TR with the pMH complexes shapes TR structural and functional avidity. The chain is T cell receptor alpha variable 26-2 from Homo sapiens (Human).